We begin with the raw amino-acid sequence, 238 residues long: Probable transcriptional regulatory protein SAK_1658 (238 aa).

The protein belongs to the TACO1 family. YeeN subfamily.

It localises to the cytoplasm. The protein is Probable transcriptional regulatory protein SAK_1658 of Streptococcus agalactiae serotype Ia (strain ATCC 27591 / A909 / CDC SS700).